Here is an 86-residue protein sequence, read N- to C-terminus: Large ribosomal subunit protein uL23 (86 aa).

This sequence belongs to the universal ribosomal protein uL23 family. As to quaternary structure, part of the 50S ribosomal subunit. Contacts protein L29.

Its function is as follows. Binds to 23S rRNA. One of the proteins that surrounds the polypeptide exit tunnel on the outside of the ribosome. This Thermococcus gammatolerans (strain DSM 15229 / JCM 11827 / EJ3) protein is Large ribosomal subunit protein uL23.